The primary structure comprises 887 residues: DNA gyrase subunit A (887 aa).

Residues 35-501 (LPDVRDGLKP…GFEDLEDEDL (467 aa)) enclose the Topo IIA-type catalytic domain. Tyr-123 serves as the catalytic O-(5'-phospho-DNA)-tyrosine intermediate. A GyrA-box motif is present at residues 528–534 (QNRGGRG). The tract at residues 811 to 865 (KEDAEDETNEDEQSTSTVSEDGTEQQREAVVNDETPGNAIHTEVIDSEENDEDGR) is disordered. The span at 813–823 (DAEDETNEDEQ) shows a compositional bias: acidic residues.

It belongs to the type II topoisomerase GyrA/ParC subunit family. As to quaternary structure, heterotetramer, composed of two GyrA and two GyrB chains. In the heterotetramer, GyrA contains the active site tyrosine that forms a transient covalent intermediate with DNA, while GyrB binds cofactors and catalyzes ATP hydrolysis.

The protein localises to the cytoplasm. The catalysed reaction is ATP-dependent breakage, passage and rejoining of double-stranded DNA.. Its function is as follows. A type II topoisomerase that negatively supercoils closed circular double-stranded (ds) DNA in an ATP-dependent manner to modulate DNA topology and maintain chromosomes in an underwound state. Negative supercoiling favors strand separation, and DNA replication, transcription, recombination and repair, all of which involve strand separation. Also able to catalyze the interconversion of other topological isomers of dsDNA rings, including catenanes and knotted rings. Type II topoisomerases break and join 2 DNA strands simultaneously in an ATP-dependent manner. This is DNA gyrase subunit A from Staphylococcus aureus (strain MSSA476).